Here is a 581-residue protein sequence, read N- to C-terminus: A-type ATP synthase subunit A (581 aa).

ATP is bound at residue 234–241 (GPFGSGKT).

It belongs to the ATPase alpha/beta chains family. As to quaternary structure, has multiple subunits with at least A(3), B(3), C, D, E, F, H, I and proteolipid K(x).

It localises to the cell membrane. It catalyses the reaction ATP + H2O + 4 H(+)(in) = ADP + phosphate + 5 H(+)(out). Its function is as follows. Component of the A-type ATP synthase that produces ATP from ADP in the presence of a proton gradient across the membrane. The A chain is the catalytic subunit. The protein is A-type ATP synthase subunit A of Archaeoglobus fulgidus (strain ATCC 49558 / DSM 4304 / JCM 9628 / NBRC 100126 / VC-16).